A 542-amino-acid chain; its full sequence is Chaperonin GroEL (542 aa).

Residues 29–32 (TLGP), 86–90 (DGTTT), Gly413, 478–480 (DAL), and Asp494 each bind ATP.

It belongs to the chaperonin (HSP60) family. Forms a cylinder of 14 subunits composed of two heptameric rings stacked back-to-back. Interacts with the co-chaperonin GroES.

It localises to the cytoplasm. It catalyses the reaction ATP + H2O + a folded polypeptide = ADP + phosphate + an unfolded polypeptide.. Its function is as follows. Together with its co-chaperonin GroES, plays an essential role in assisting protein folding. The GroEL-GroES system forms a nano-cage that allows encapsulation of the non-native substrate proteins and provides a physical environment optimized to promote and accelerate protein folding. The protein is Chaperonin GroEL of Clostridioides difficile (strain 630) (Peptoclostridium difficile).